We begin with the raw amino-acid sequence, 235 residues long: Thaumatin II (235 aa).

The first 22 residues, 1-22, serve as a signal peptide directing secretion; it reads MAATTCFFFLFPFLLLLTLSRA. 8 disulfides stabilise this stretch: C31-C226, C78-C88, C93-C99, C143-C215, C148-C199, C156-C167, C171-C180, and C181-C186. Residues 230–235 constitute a propeptide, removed in mature form; the sequence is LELEDE.

This sequence belongs to the thaumatin family.

It is found in the cytoplasmic vesicle. Functionally, taste-modifying protein; intensely sweet-tasting. It is 100000 times sweeter than sucrose on a molar basis. This Thaumatococcus daniellii (Katemfe) protein is Thaumatin II.